The sequence spans 176 residues: Pituitary adenylate cyclase-activating polypeptide (176 aa).

Positions 1 to 24 (MTMCSGARLALLVYGILMHSSVYG) are cleaved as a signal peptide. Residues 25 to 80 (SPAASGLRFPGIRPENEAYDEDGNPQQDFYDSEPPGVGSPASALRDAYALYYPAEE) constitute a propeptide that is removed on maturation. Disordered regions lie at residues 36 to 62 (IRPE…PGVG) and 115 to 134 (GTPG…RHSD). The tract at residues 150–158 (VKKYLAAVL) is important for receptor binding. Leu-158 carries the post-translational modification Leucine amide. Residue Lys-169 is modified to Lysine amide. A propeptide spanning residues 173–176 (IPYL) is cleaved from the precursor.

The protein belongs to the glucagon family.

It is found in the secreted. Its function is as follows. PACAP is a neuropeptide involved in diverse array of physiological processes through activating the PACAP subfamily of class B1 G protein-coupled receptors: VIP receptor 1 (VIPR1), VIP receptor 2 (VIPR2), and PACAP type I receptor (ADCYAP1R1). Exerts neuroprotective and general cytoprotective effects due to anti-apoptotic, anti-inflammatory, and antioxidant actions. Promotes neuron projection development through the RAPGEF2/Rap1/B-Raf/ERK pathway. In chromaffin cells, induces long-lasting increase of intracellular calcium concentrations and neuroendocrine secretion. Involved in the control of glucose homeostasis, induces insulin secretion by pancreatic beta cells. PACAP exists in two bioactive forms from proteolysis of the same precursor protein, PACAP27 and PACAP38, which differ by eleven amino acid residues in the C-terminus. This chain is Pituitary adenylate cyclase-activating polypeptide (ADCYAP1), found in Ovis aries (Sheep).